The chain runs to 173 residues: Protein FAM180A (173 aa).

An N-terminal signal peptide occupies residues 1–17 (MHWKMLLLLLLYYNAEA).

Belongs to the FAM180 family.

It localises to the secreted. This is Protein FAM180A (FAM180A) from Homo sapiens (Human).